The primary structure comprises 443 residues: C4-dicarboxylate transport protein (443 aa).

Helical transmembrane passes span 10–30 (SLYFQVIVAIAIGILLGHFYP), 46–66 (LIKMVIAPIIFCTVVSGIAGM), 78–98 (YALLYFEIVSTIALLIGLIVV), 130–150 (SIVGFILNIIPATIVGAFANG), 152–172 (ILQVLMFSVVFGFALHRLGAY), 199–219 (PLGALGAMAFTIGAYGVGSLV), 224–244 (LMICFYITCVVFVLVVLGAIC), 291–311 (VVGLVIPTGYSFNLDGTSIYL), 332–352 (ITLLLVLLLSSKGAAGVTGSG), and 354–374 (IVLAATLSAVGHLPVAGLALI). The tract at residues 415–443 (ELASGGRPITDTRETDDLGVAEGPAPSIK) is disordered.

Belongs to the dicarboxylate/amino acid:cation symporter (DAACS) (TC 2.A.23) family.

It localises to the cell inner membrane. Its function is as follows. Responsible for the transport of dicarboxylates such as succinate, fumarate, and malate from the periplasm across the membrane. The chain is C4-dicarboxylate transport protein from Pseudomonas fluorescens (strain ATCC BAA-477 / NRRL B-23932 / Pf-5).